A 408-amino-acid chain; its full sequence is Mitochondrial outer membrane protein SLC25A46 (408 aa).

2 disordered regions span residues 1–23 (MHPR…EEPC) and 52–80 (HWGE…LGAG). Low complexity predominate over residues 66-76 (LGAAGLNEEPG). One copy of the Solcar 1 repeat lies at 86-177 (QLNRFAGFGI…GIISEFTPLP (92 aa)). A run of 6 helical transmembrane segments spans residues 93–113 (FGIG…CIVL), 157–177 (FIVQ…TPLP), 189–209 (IGGH…FYSA), 248–268 (LLPL…HYVI), 304–324 (FPEL…LYPL), and 373–393 (LGFY…VAVL). One copy of the Solcar 2 repeat lies at 301–403 (DAYFPELIAS…QLTKIIYSTL (103 aa)).

Belongs to the mitochondrial carrier (TC 2.A.29) family.

It is found in the mitochondrion outer membrane. Its function is as follows. Transmembrane protein of the mitochondrial outer membrane that controls mitochondrial organization. May regulate the assembly of the MICOS (mitochondrial contact site and cristae organizing system) complex which is essential to the biogenesis and dynamics of mitochondrial cristae, the inwards folds of the inner mitochondrial membrane. Through its interaction with the EMC (endoplasmic reticulum membrane protein complex), could regulate mitochondrial lipid homeostasis and thereby mitochondrial fission. The protein is Mitochondrial outer membrane protein SLC25A46 of Gallus gallus (Chicken).